Consider the following 355-residue polypeptide: MTQESNSNFFNFLLFGFVTAIAFYSGTQFNKSSEQEEHINHANLYSVKKFDDGAKEYSIMLITDLDHDSKDGKKWKSLVSRGFLKVSADHKHADIHFDKDSEYYVDTNIAAGGRAMELSDLAVFNGKLYSIDDRTGLIYQISDKKALPWVLLNDGPGNVVKGFKGEWITVKDTELIVGGLGKEWTTTDGVYVNDHPMWVKHVSAHGAVHHENWKDVYIRVRRAAGIEYPGYMIHEAVQWSAIHRKWFFLPRRMSNEKYSEAEDENRGTNVLVIGNEELTDFEVVRVGSENNKSRGFAAFQFVPNTHHQLIVAIKSEEKDGKPVASYASVFDIHGNVILDEYLLHGPYKYEGIAFA.

Residues 1-6 (MTQESN) are Cytoplasmic-facing. A helical; Signal-anchor for type II membrane protein membrane pass occupies residues 7 to 29 (SNFFNFLLFGFVTAIAFYSGTQF). Residue Asn-30 is glycosylated (N-linked (GlcNAc...) asparagine). Topologically, residues 30–355 (NKSSEQEEHI…PYKYEGIAFA (326 aa)) are lumenal. Ca(2+) contacts are provided by Ser-119, Glu-166, and Glu-235. Asn-291 carries N-linked (GlcNAc...) asparagine glycosylation. Glu-350 is a Ca(2+) binding site.

This sequence belongs to the apyrase family. Requires Ca(2+) as cofactor.

Its subcellular location is the endomembrane system. The catalysed reaction is a ribonucleoside 5'-diphosphate + H2O = a ribonucleoside 5'-phosphate + phosphate + H(+). Functionally, hydrolyzes UDP and to a lesser extent GDP. By preventing the accumulation of NDP, may promote the reglucosylation of incompletely folded glycoproteins in the endoplasmic reticulum following the unfolded protein response. In Caenorhabditis elegans, this protein is Apyrase apy-1.